We begin with the raw amino-acid sequence, 1011 residues long: Cell division cycle-associated protein 2 (1011 aa).

Over residues 1–22 (MDTCSQESEPLQTKESPINNAG) the composition is skewed to polar residues. The segment at 1–26 (MDTCSQESEPLQTKESPINNAGKTPL) is disordered. Phosphoserine occurs at positions 125, 130, 209, 293, and 310. The residue at position 313 (Thr-313) is a Phosphothreonine. The 61-residue stretch at 380-440 (KRKRVTFGED…PEWLPQPNFD (61 aa)) folds into the PP1-binding domain. Ser-391 and Ser-398 each carry phosphoserine. 2 disordered regions span residues 395–438 (LDES…PQPN) and 522–544 (PCKE…KVLP). Thr-403 is subject to Phosphothreonine. Positions 418 to 431 (SSLSPPLLEQSPVP) are enriched in low complexity. The residue at position 428 (Ser-428) is a Phosphoserine. Basic and acidic residues predominate over residues 522 to 543 (PCKEKKTNRRKSQESKHADKVL). Phosphoserine occurs at positions 583, 702, and 747. A Glycyl lysine isopeptide (Lys-Gly) (interchain with G-Cter in SUMO2) cross-link involves residue Lys-753. Residues 790 to 803 (DQRKVSKSQGEDLG) show a composition bias toward basic and acidic residues. 2 disordered regions span residues 790-835 (DQRK…GLHL) and 896-1011 (GLVW…LSEN). Positions 931–945 (SSRQDPCTLPSTSSE) are enriched in polar residues. Position 967 is a phosphoserine (Ser-967). Polar residues predominate over residues 968–983 (FCTSTLANPKSTTQSR). Residues 993–1011 (QKRENTLQETSRESDLSEN) show a composition bias toward basic and acidic residues.

In terms of assembly, interacts with PPP1CC. Post-translationally, phosphorylated by CDK1. May regulate its subcellular location.

It is found in the nucleus. Functionally, regulator of chromosome structure during mitosis required for condensin-depleted chromosomes to retain their compact architecture through anaphase. Acts by mediating the recruitment of phopsphatase PP1-gamma subunit (PPP1CC) to chromatin at anaphase and into the following interphase. At anaphase onset, its association with chromatin targets a pool of PPP1CC to dephosphorylate substrates. The polypeptide is Cell division cycle-associated protein 2 (CDCA2) (Bos taurus (Bovine)).